The chain runs to 261 residues: HLA class II histocompatibility antigen, DQ beta 1 chain (261 aa).

Residues 1–32 (MSWKKALRIPGGLRAATVTLMLAMLSTPVAEG) form the signal peptide. The segment at 33-126 (RDSPEDFVYQ…LELRTTLQRR (94 aa)) is beta-1. At 33 to 230 (RDSPEDFVYQ…RAQSESAQSK (198 aa)) the chain is on the extracellular side. Intrachain disulfides connect Cys47/Cys111 and Cys149/Cys205. N-linked (GlcNAc...) asparagine glycosylation occurs at Asn51. The tract at residues 127-220 (VEPTVTISPS…SLQNPITVEW (94 aa)) is beta-2. The Ig-like C1-type domain occupies 129 to 217 (PTVTISPSRT…EHPSLQNPIT (89 aa)). The tract at residues 221-230 (RAQSESAQSK) is connecting peptide. A helical membrane pass occupies residues 231-251 (MLSGIGGFVLGLIFLGLGLII). The Cytoplasmic portion of the chain corresponds to 252-261 (HHRSQKGLLH).

It belongs to the MHC class II family. As to quaternary structure, heterodimer of an alpha and a beta subunit; also referred as MHC class II molecule. In the endoplasmic reticulum (ER) it forms a heterononamer; 3 MHC class II molecules bind to a CD74 homotrimer (also known as invariant chain or HLA class II histocompatibility antigen gamma chain). In the endosomal/lysosomal system; CD74 undergoes sequential degradation by various proteases; leaving a small fragment termed CLIP on each MHC class II molecule. MHC class II molecule interacts with HLA_DM, and HLA_DO in B-cells, in order to release CLIP and facilitate the binding of antigenic peptides.

The protein localises to the cell membrane. The protein resides in the endoplasmic reticulum membrane. Its subcellular location is the golgi apparatus. It localises to the trans-Golgi network membrane. It is found in the endosome membrane. The protein localises to the lysosome membrane. In terms of biological role, binds peptides derived from antigens that access the endocytic route of antigen presenting cells (APC) and presents them on the cell surface for recognition by the CD4 T-cells. The peptide binding cleft accommodates peptides of 10-30 residues. The peptides presented by MHC class II molecules are generated mostly by degradation of proteins that access the endocytic route, where they are processed by lysosomal proteases and other hydrolases. Exogenous antigens that have been endocytosed by the APC are thus readily available for presentation via MHC II molecules, and for this reason this antigen presentation pathway is usually referred to as exogenous. As membrane proteins on their way to degradation in lysosomes as part of their normal turn-over are also contained in the endosomal/lysosomal compartments, exogenous antigens must compete with those derived from endogenous components. Autophagy is also a source of endogenous peptides, autophagosomes constitutively fuse with MHC class II loading compartments. In addition to APCs, other cells of the gastrointestinal tract, such as epithelial cells, express MHC class II molecules and CD74 and act as APCs, which is an unusual trait of the GI tract. To produce a MHC class II molecule that presents an antigen, three MHC class II molecules (heterodimers of an alpha and a beta chain) associate with a CD74 trimer in the ER to form a heterononamer. Soon after the entry of this complex into the endosomal/lysosomal system where antigen processing occurs, CD74 undergoes a sequential degradation by various proteases, including CTSS and CTSL, leaving a small fragment termed CLIP (class-II-associated invariant chain peptide). The removal of CLIP is facilitated by HLA-DM via direct binding to the alpha-beta-CLIP complex so that CLIP is released. HLA-DM stabilizes MHC class II molecules until primary high affinity antigenic peptides are bound. The MHC II molecule bound to a peptide is then transported to the cell membrane surface. In B-cells, the interaction between HLA-DM and MHC class II molecules is regulated by HLA-DO. Primary dendritic cells (DCs) also to express HLA-DO. Lysosomal microenvironment has been implicated in the regulation of antigen loading into MHC II molecules, increased acidification produces increased proteolysis and efficient peptide loading. The polypeptide is HLA class II histocompatibility antigen, DQ beta 1 chain (HLA-DQB1) (Homo sapiens (Human)).